A 458-amino-acid polypeptide reads, in one-letter code: UPF0210 protein MJ1665 (458 aa).

This sequence belongs to the UPF0210 family.

The polypeptide is UPF0210 protein MJ1665 (Methanocaldococcus jannaschii (strain ATCC 43067 / DSM 2661 / JAL-1 / JCM 10045 / NBRC 100440) (Methanococcus jannaschii)).